Consider the following 332-residue polypeptide: Autoinducer 2 import system permease protein LsrD (332 aa).

Helical transmembrane passes span 7–27 (YSWE…FGLI), 45–65 (ICIG…GMDI), 70–90 (TIGL…PLPL), 91–111 (AIII…GLII), 118–138 (LVIT…LSGM), 162–182 (FLGI…FWLL), 216–236 (VYAM…SYFG), 240–260 (SDLG…GGAN), 261–281 (IYGG…VGFL), and 288–308 (AGVP…VVVV).

Belongs to the binding-protein-dependent transport system permease family. AraH/RbsC subfamily. In terms of assembly, the complex is composed of two ATP-binding proteins (LsrA), two transmembrane proteins (LsrC and LsrD) and a solute-binding protein (LsrB).

It localises to the cell inner membrane. Functionally, part of the ABC transporter complex LsrABCD involved in autoinducer 2 (AI-2) import. Probably responsible for the translocation of the substrate across the membrane. The polypeptide is Autoinducer 2 import system permease protein LsrD (lsrD) (Salmonella typhi).